A 464-amino-acid polypeptide reads, in one-letter code: Septin homolog spn5 (464 aa).

Positions 28 to 91 are disordered; it reads QVDESSAKRS…VPNSNGKSIP (64 aa). 2 stretches are compositionally biased toward basic and acidic residues: residues 41–54 and 69–81; these read ESRKSKDVTRKEQI and TAKDKKTEFKQDE. One can recognise a Septin-type G domain in the interval 115–370; it reads NGIDINLIVV…DTFRTEKLVA (256 aa). A G1 motif region spans residues 125 to 132; the sequence is GESSLGKT. GTP is bound by residues 125–132, T151, G177, 257–265, G304, and R319; these read GESSLGKT and KADTMTSDE. Positions 174–177 are G3 motif; it reads DTPG. Residues 256–259 are G4 motif; it reads GKAD. Residues 396 to 453 are a coiled coil; that stretch reads LVEEALTKVMKEKYREKENNLELLETNLKTHHKDYKHALKKRITALEEEKNRLIKEIG.

Belongs to the TRAFAC class TrmE-Era-EngA-EngB-Septin-like GTPase superfamily. Septin GTPase family. In terms of assembly, component of the sporulation-specific septin complex composed of at least spn2, spn5, spn6 and spn7.

It localises to the nucleus. It is found in the forespore membrane. Functionally, septin-like protein involved in the correct orientation of forespore membrane extension during sporulation. This chain is Septin homolog spn5 (spn5), found in Schizosaccharomyces pombe (strain 972 / ATCC 24843) (Fission yeast).